We begin with the raw amino-acid sequence, 314 residues long: MSDKILVFGHQKPDTDAIGSSYGFSYLSNHRPNGALNTEVVALGTPNEETQFVLDYFGVKAPRVVKSAKEEGVDTVILTDHNEFQQSISDIEDLTIYGVVDHHRVANFNTAAPLFMTVEPVGSASSIVYRKFLEANVEIPKEVAGLLLSGLISDTLLLKSPTTHVTDHKVAKELAEIAGVNLEEYGLAMLKAGTNLSTKTAEELIDIDAKTFELNGSNVRIAQVNTVDIPEVLERLSDIKAAINASMTANGYDDFVFMITDIVNSNSEIIALGAHPEKSEAAFNFTLADDHAFLAGAVSRKKQVVPQLTESFNK.

6 residues coordinate Mn(2+): His-10, Asp-14, Asp-16, Asp-80, His-102, and Asp-154.

This sequence belongs to the PPase class C family. It depends on Mn(2+) as a cofactor.

It localises to the cytoplasm. It catalyses the reaction diphosphate + H2O = 2 phosphate + H(+). This is Probable manganese-dependent inorganic pyrophosphatase (ppaC) from Lactococcus lactis subsp. lactis (strain IL1403) (Streptococcus lactis).